The sequence spans 272 residues: Putative bark agglutinin LECRPA3 (272 aa).

The first 29 residues, 1–29 (PFNPETVYALLAMLISFFVLLASARKENS), serve as a signal peptide directing secretion. N-linked (GlcNAc...) asparagine glycans are attached at residues Asn-36, Asn-39, and Asn-65. Glu-150 and Asp-152 together coordinate Mn(2+). Positions 152, 154, 156, and 159 each coordinate Ca(2+). The Mn(2+) site is built by Asp-159 and His-164.

The protein belongs to the leguminous lectin family. As to quaternary structure, homotetramer. Weak expression in bark. The lectin accumulates in the inner bark in autumn.

Bark lectins are storage proteins that probably maintain stocks of nitrogen during dormant period. Self-aggregatable molecules that can bind their own carbohydrate side chains. They could also play a role in the plant's defense against phytophagous invertebrates or herbivorous higher animals. The polypeptide is Putative bark agglutinin LECRPA3 (Robinia pseudoacacia (Black locust)).